A 737-amino-acid polypeptide reads, in one-letter code: Prospero homeobox protein 1 (737 aa).

Residues 1–28 are interaction with RORG; the sequence is MPDHDSTALLSRQTKRRRVDIGVKRTVG. The segment covering 103–135 has biased composition (polar residues); the sequence is KNGGTEPSFQASGLSSTGSEVHQEDICSNSSRD. The tract at residues 103–149 is disordered; that stretch reads KNGGTEPSFQASGLSSTGSEVHQEDICSNSSRDSPPECLSPFGRPTM. A phosphoserine mark is found at S177, S179, and S199. Positions 178–242 are disordered; that stretch reads HSPSVALRGN…REERRQLKQQ (65 aa). Positions 213–223 are enriched in low complexity; that stretch reads LPQQQQQSFQQ. Over residues 227–242 the composition is skewed to basic and acidic residues; sequence ARKEQKREERRQLKQQ. Phosphoserine occurs at positions 291 and 295. Positions 320–337 are enriched in basic and acidic residues; it reads MAENKPKREGNNKERDHG. Disordered regions lie at residues 320 to 344 and 445 to 476; these read MAEN…LQPE and KNSS…TGFT. A Glycyl lysine isopeptide (Lys-Gly) (interchain with G-Cter in SUMO2) cross-link involves residue K324. Positions 464–476 are enriched in polar residues; sequence LHQSPLSATTGFT. 3 positions are modified to phosphoserine: S511, S514, and S557. Residues 577–635 form the Prospero-type homeo domain; sequence QEGLSPNHLKKAKLMFFYTRYPSSNMLKTYFSDVKFNRCITSQLIKWFSNFREFYYIQM. The homeo-Prospero stretch occupies residues 577-735; it reads QEGLSPNHLK…KSPNCLQELL (159 aa). The Prospero domain maps to 636 to 735; the sequence is EKYARQAIND…KSPNCLQELL (100 aa). The segment at 723 to 729 is essential for nuclear localization, interaction with RORG, repression of RORG transcriptional activator activity; that stretch reads EIFKSPN.

Belongs to the Prospero homeodomain family. In terms of assembly, interacts with RORA and RORG (via AF-2 motif). In terms of tissue distribution, most actively expressed in the developing lens. Detected also in embryonic brain, lung, liver and kidney. In adult, it is more abundant in heart and liver than in brain, skeletal muscle, kidney and pancreas.

The protein localises to the nucleus. Functionally, transcription factor involved in developmental processes such as cell fate determination, gene transcriptional regulation and progenitor cell regulation in a number of organs. Plays a critical role in embryonic development and functions as a key regulatory protein in neurogenesis and the development of the heart, eye lens, liver, pancreas and the lymphatic system. Involved in the regulation of the circadian rhythm. Represses: transcription of the retinoid-related orphan receptor RORG, transcriptional activator activity of RORA and RORG and the expression of RORA/G-target genes including core clock components: BMAL1, NPAS2 and CRY1 and metabolic genes: AVPR1A and ELOVL3. The polypeptide is Prospero homeobox protein 1 (PROX1) (Homo sapiens (Human)).